Consider the following 96-residue polypeptide: Large ribosomal subunit protein uL23 (96 aa).

The protein belongs to the universal ribosomal protein uL23 family. Part of the 50S ribosomal subunit. Contacts protein L29, and trigger factor when it is bound to the ribosome.

Its function is as follows. One of the early assembly proteins it binds 23S rRNA. One of the proteins that surrounds the polypeptide exit tunnel on the outside of the ribosome. Forms the main docking site for trigger factor binding to the ribosome. This chain is Large ribosomal subunit protein uL23, found in Alkaliphilus metalliredigens (strain QYMF).